A 401-amino-acid chain; its full sequence is Anhydro-N-acetylmuramic acid kinase (401 aa).

25-32 (GTSLDGLD) serves as a coordination point for ATP.

Belongs to the anhydro-N-acetylmuramic acid kinase family.

It carries out the reaction 1,6-anhydro-N-acetyl-beta-muramate + ATP + H2O = N-acetyl-D-muramate 6-phosphate + ADP + H(+). The protein operates within amino-sugar metabolism; 1,6-anhydro-N-acetylmuramate degradation. It functions in the pathway cell wall biogenesis; peptidoglycan recycling. Functionally, catalyzes the specific phosphorylation of 1,6-anhydro-N-acetylmuramic acid (anhMurNAc) with the simultaneous cleavage of the 1,6-anhydro ring, generating MurNAc-6-P. Is required for the utilization of anhMurNAc either imported from the medium or derived from its own cell wall murein, and thus plays a role in cell wall recycling. This Pseudoalteromonas atlantica (strain T6c / ATCC BAA-1087) protein is Anhydro-N-acetylmuramic acid kinase.